The following is a 474-amino-acid chain: Cysteine--tRNA ligase (474 aa).

Cysteine 29 lines the Zn(2+) pocket. The short motif at 31 to 41 is the 'HIGH' region element; the sequence is ITPYDHVHVGH. Zn(2+) is bound by residues cysteine 215, histidine 240, and glutamate 244. Residues 273 to 277 carry the 'KMSKS' region motif; that stretch reads KMSKS. Residue lysine 276 coordinates ATP.

It belongs to the class-I aminoacyl-tRNA synthetase family. Zn(2+) serves as cofactor.

It localises to the cytoplasm. The enzyme catalyses tRNA(Cys) + L-cysteine + ATP = L-cysteinyl-tRNA(Cys) + AMP + diphosphate. The sequence is that of Cysteine--tRNA ligase from Pyrobaculum aerophilum (strain ATCC 51768 / DSM 7523 / JCM 9630 / CIP 104966 / NBRC 100827 / IM2).